A 205-amino-acid chain; its full sequence is Cell wall / vacuolar inhibitor of fructosidase 1 (205 aa).

Residues 1-23 (MKMMKVMMLIVMMMMVMVMVSEG) form the signal peptide. 2 disulfides stabilise this stretch: Cys-30/Cys-39 and Cys-93/Cys-134. N-linked (GlcNAc...) asparagine glycosylation is found at Asn-139 and Asn-156.

Belongs to the PMEI family. As to expression, mostly expressed in roots, senescent leaves and flowers (in sepals), and, to a lower extent, in stems, specifically in the vascular tissues (e.g. in the phloem).

The protein resides in the vacuole. Its function is as follows. Inhibits fructosidases from vacuoles (vacuolar invertase VI). This chain is Cell wall / vacuolar inhibitor of fructosidase 1 (C/VIF1), found in Arabidopsis thaliana (Mouse-ear cress).